We begin with the raw amino-acid sequence, 419 residues long: MDKLIINGGRKLKGEVTVSGSKNASLPICIAAVLAPGASTITNVPRLRDITTTAKLLESLGATIERHENTMRIDAGTINTVEATYDLVKTMRASVLVLGPLLARFGRSRVSLPGGCAIGARPIDQHLKGLKALGAEIRLEHGYVEAIAKKGLKGARINFDVSTVGGTEHLMMAAAIAKGESILENAAREPEIADLADYLNRMGAKVEGAGTDTIRIQGVSELTPAAYEVMPDRIEAGTFMCAAAITGGDIKINGMKLEHLDALTFKLMDAGVEITNRNGVVRVKGPKRPQAVNIKTRPYPGFATDMQAQFMALMCVAEGASVISENIFENRFMHVSELLRFGADITVEGNSATVKGVKKLSGAPVMATDLRASACLVLAGLAAEGTTEIQRIYHLDRGYEQIETKLAGLGADIQRVSEP.

22-23 (KN) contributes to the phosphoenolpyruvate binding site. A UDP-N-acetyl-alpha-D-glucosamine-binding site is contributed by arginine 92. Cysteine 116 functions as the Proton donor in the catalytic mechanism. Cysteine 116 carries the 2-(S-cysteinyl)pyruvic acid O-phosphothioketal modification. UDP-N-acetyl-alpha-D-glucosamine-binding positions include 121 to 125 (RPIDQ), aspartate 305, and isoleucine 327.

It belongs to the EPSP synthase family. MurA subfamily.

Its subcellular location is the cytoplasm. It catalyses the reaction phosphoenolpyruvate + UDP-N-acetyl-alpha-D-glucosamine = UDP-N-acetyl-3-O-(1-carboxyvinyl)-alpha-D-glucosamine + phosphate. It functions in the pathway cell wall biogenesis; peptidoglycan biosynthesis. Functionally, cell wall formation. Adds enolpyruvyl to UDP-N-acetylglucosamine. This Trichlorobacter lovleyi (strain ATCC BAA-1151 / DSM 17278 / SZ) (Geobacter lovleyi) protein is UDP-N-acetylglucosamine 1-carboxyvinyltransferase.